A 517-amino-acid chain; its full sequence is Ladinin-1 (517 aa).

Residues 1–401 (MAVSRKDWSA…SASMKLPDNT (401 aa)) form a disordered region. A Phosphoserine modification is found at serine 38. Residues 48–58 (LSQNGDRQASA) are compositionally biased toward polar residues. Residues serine 64, serine 78, serine 121, and serine 123 each carry the phosphoserine modification. A compositionally biased stretch (polar residues) spans 120 to 131 (NSLSPVQATQKP). Basic and acidic residues-rich tracts occupy residues 134–151 (SKKE…REQR) and 161–174 (LVGR…KGVP). 8 SEK repeats span residues 203-205 (SEK), 209-211 (SEK), 215-217 (SEK), 221-223 (SEK), 227-229 (SEK), 239-241 (SEK), 257-259 (SEK), and 269-271 (SEK). An 8 X SEK repeats region spans residues 203–271 (SEKVLASEKT…IFEKALASEK (69 aa)). Residues 219–233 (AVSEKRNSSEKKSVL) are compositionally biased toward basic and acidic residues. 3 positions are modified to phosphoserine: serine 347, serine 356, and serine 394. Polar residues predominate over residues 355–373 (SSPTQRTYSSSLKRSSPRT). Omega-N-methylarginine is present on arginine 424. Residues 481–517 (RTQESGDQDPQEAQKASSATERTQWGQKSDSSLDAEV) form a disordered region. Serine 485 carries the phosphoserine modification. Residues 494–517 (QKASSATERTQWGQKSDSSLDAEV) are compositionally biased toward polar residues.

It localises to the secreted. It is found in the extracellular space. The protein resides in the extracellular matrix. The protein localises to the basement membrane. Anchoring filament protein which is a component of the basement membrane zone. This is Ladinin-1 (LAD1) from Homo sapiens (Human).